Reading from the N-terminus, the 329-residue chain is POU domain, class 5, transcription factor 2 (329 aa).

The segment covering 1–14 has biased composition (polar residues); the sequence is MAGRRSSNVFPLSG. Residues 1–24 form a disordered region; sequence MAGRRSSNVFPLSGNSGGGLEVDT. The region spanning 107-181 is the POU-specific domain; it reads DVSAIQKEME…LLKMWLEEVD (75 aa). A DNA-binding region (homeobox) is located at residues 199–258; that stretch reads RKRRRASRERRIGSNLEKLFLQCPEPTPQQISYIAGRLRLQKDLVQVWFSNRSQMGSWPT.

Belongs to the POU transcription factor family. Class-5 subfamily. In terms of tissue distribution, in adult brain, expressed in the olfactory bulb, becoming specifically concentrated in the mitral cell layer. Also found in the pyramidal cell layer of the hippocampus, in the granule cell layer of the cerebellum and in the cortex.

The protein localises to the nucleus. Functionally, transcription factor that binds preferentially to the octamer motif (5'-ATGTTAAT-3'). May exert a regulatory function in meiotic events that are required for terminal differentiation of male germ cell. This chain is POU domain, class 5, transcription factor 2 (Pou5f2), found in Mus musculus (Mouse).